Reading from the N-terminus, the 258-residue chain is MSSIDPRAIIDPSARLADDVVVGPWSIVGPDVEIGEGTVIGPHVVLKGPTVIGKHNRIYQFSSVGEDTPDLKYKGEPTRLVIGDHNTIREGVTIHRGTVQDRSETTIGDHNLIMAYAHIGHDSVIGNHCILVNNTALAGHVWVDDWAILSGYTLVHQFCRIGAHSFSGMGTAIGKDVPAYVTVFGNPAEARSMNFEGMRRRGFSAEAIAALRKAYKLVYRQGLTVEQALTELAESAAQFPEVAVFRDSIQASTRGITR.

The protein belongs to the transferase hexapeptide repeat family. LpxA subfamily. As to quaternary structure, homotrimer.

Its subcellular location is the cytoplasm. It carries out the reaction a (3R)-hydroxyacyl-[ACP] + UDP-N-acetyl-alpha-D-glucosamine = a UDP-3-O-[(3R)-3-hydroxyacyl]-N-acetyl-alpha-D-glucosamine + holo-[ACP]. It participates in glycolipid biosynthesis; lipid IV(A) biosynthesis; lipid IV(A) from (3R)-3-hydroxytetradecanoyl-[acyl-carrier-protein] and UDP-N-acetyl-alpha-D-glucosamine: step 1/6. Functionally, involved in the biosynthesis of lipid A, a phosphorylated glycolipid that anchors the lipopolysaccharide to the outer membrane of the cell. The polypeptide is Acyl-[acyl-carrier-protein]--UDP-N-acetylglucosamine O-acyltransferase (Ectopseudomonas mendocina (strain ymp) (Pseudomonas mendocina)).